A 329-amino-acid polypeptide reads, in one-letter code: Ethylene-responsive transcription factor ERF117 (329 aa).

Disordered regions lie at residues 25–51 (DATDSSSDDESISGNNPRRQIKPKPPK) and 71–90 (NSTGNKAAGNRKTSSGFKGV). Over residues 71–86 (NSTGNKAAGNRKTSSG) the composition is skewed to polar residues. The AP2/ERF DNA-binding region spans 86 to 143 (GFKGVRRRPWGKFAAEIRNPFEKKRKWLGTFPTEEEAAEAYQKSKREFDERLGLVKQE).

It belongs to the AP2/ERF transcription factor family. ERF subfamily.

It localises to the nucleus. Functionally, probably acts as a transcriptional activator. Binds to the GCC-box pathogenesis-related promoter element. May be involved in the regulation of gene expression by stress factors and by components of stress signal transduction pathways. This Arabidopsis thaliana (Mouse-ear cress) protein is Ethylene-responsive transcription factor ERF117 (ERF117).